Here is a 331-residue protein sequence, read N- to C-terminus: Probable leucine carboxyl methyltransferase 1 (331 aa).

S-adenosyl-L-methionine contacts are provided by residues Arg-82, Gly-107, Asp-131, Asp-179–Leu-180, and Glu-206.

It belongs to the methyltransferase superfamily. LCMT family.

It catalyses the reaction [phosphatase 2A protein]-C-terminal L-leucine + S-adenosyl-L-methionine = [phosphatase 2A protein]-C-terminal L-leucine methyl ester + S-adenosyl-L-homocysteine. Methylates the carboxyl group of the C-terminal leucine residue of protein phosphatase 2A catalytic subunits to form alpha-leucine ester residues. The protein is Probable leucine carboxyl methyltransferase 1 of Caenorhabditis briggsae.